An 838-amino-acid chain; its full sequence is Protein translocase subunit SecA (838 aa).

ATP-binding positions include Gln-87, 105–109 (GEGKT), and Asp-494. Basic and acidic residues-rich tracts occupy residues 781 to 790 (EQEFQHKDET) and 803 to 819 (EDAK…KVGR). Positions 781-838 (EQEFQHKDETANVQYSGPAESAEDAKKEPKRREAPKVGRNDPCPCGSGKKYKKCHGAK) are disordered. 4 residues coordinate Zn(2+): Cys-823, Cys-825, Cys-834, and His-835. Residues 829–838 (KKYKKCHGAK) are compositionally biased toward basic residues.

Belongs to the SecA family. As to quaternary structure, monomer and homodimer. Part of the essential Sec protein translocation apparatus which comprises SecA, SecYEG and auxiliary proteins SecDF-YajC and YidC. It depends on Zn(2+) as a cofactor.

The protein resides in the cell inner membrane. Its subcellular location is the cytoplasm. It catalyses the reaction ATP + H2O + cellular proteinSide 1 = ADP + phosphate + cellular proteinSide 2.. Part of the Sec protein translocase complex. Interacts with the SecYEG preprotein conducting channel. Has a central role in coupling the hydrolysis of ATP to the transfer of proteins into and across the cell membrane, serving as an ATP-driven molecular motor driving the stepwise translocation of polypeptide chains across the membrane. This Solidesulfovibrio magneticus (strain ATCC 700980 / DSM 13731 / RS-1) (Desulfovibrio magneticus) protein is Protein translocase subunit SecA.